Reading from the N-terminus, the 121-residue chain is Large ribosomal subunit protein uL14 (121 aa).

The protein belongs to the universal ribosomal protein uL14 family. As to quaternary structure, part of the 50S ribosomal subunit. Forms a cluster with proteins L3 and L19. In the 70S ribosome, L14 and L19 interact and together make contacts with the 16S rRNA in bridges B5 and B8.

Its function is as follows. Binds to 23S rRNA. Forms part of two intersubunit bridges in the 70S ribosome. This Legionella pneumophila (strain Corby) protein is Large ribosomal subunit protein uL14.